Consider the following 539-residue polypeptide: MTGATPENRTAPSPPPVKHVPESVLPAKPPKRNNYAFACAILASMTSILLGYDIGVMSGAMIYIKRDLKINDLQIGILAGSLNIYSLIGSCAAGRTSDWIGRRYTIVLAGAIFFAGAILMGLSPNYAFLMFGRFIAGIGVGYALMIAPVYTAEVSPASSRGFLNSFPEVFINAGIMLGYVSNLAFSNLPLKVGWRLMLGIGAVPSVILAIGVLAMPESPRWLVMQGRLGDAKRVLDKTSDSPTEATLRLEDIKHAAGIPADCHDDVVQVSRRNSHGEGVWRELLIRPTPAVRRVMIAAIGIHFFQQASGIDAVVLFSPRIFKTAGLKTDHQQLLATVAVGVVKTSFILVATFLLDRIGRRPLLLTSVGGMVLSLAALGTSLTIIDQSEKKVMWAVVVAIATVMTYVATFSIGAGPITWVYSSEIFPLRLRSQGSSMGVVVNRVTSGVISISFLPMSKAMTTGGAFYLFGGIATVAWVFFYTFLPETQGRMLEDMDELFSGFRWRDSKSKPKGNPEKTVPNPEVEIGSNKQWKEGDTQSS.

The segment covering 1-11 (MTGATPENRTA) has biased composition (polar residues). Residues 1 to 24 (MTGATPENRTAPSPPPVKHVPESV) form a disordered region. Transmembrane regions (helical) follow at residues 37–57 (FACA…IGVM), 73–93 (LQIG…SCAA), 104–124 (YTIV…GLSP), 127–147 (AFLM…LMIA), 165–185 (SFPE…NLAF), 196–216 (LMLG…LAMP), 296–316 (IAAI…VVLF), 333–353 (LLAT…ATFL), 364–384 (LTSV…LTII), 391–411 (VMWA…TFSI), 433–453 (GSSM…ISFL), and 463–483 (GAFY…YTFL). Composition is skewed to basic and acidic residues over residues 503-514 (WRDSKSKPKGNP) and 530-539 (QWKEGDTQSS). Residues 503–539 (WRDSKSKPKGNPEKTVPNPEVEIGSNKQWKEGDTQSS) are disordered.

It belongs to the major facilitator superfamily. Sugar transporter (TC 2.A.1.1) family. As to expression, highly expressed in roots. Expressed in vascular tissue of leaves, sepals and siliques.

Its subcellular location is the cell membrane. Functionally, plasma membrane broad-spectrum sugar-proton symporter. Mediates the uptake of linear polyols such as sorbitol, xylitol, erythritol or glycerol. Can transport the cyclic polyol myo-inositol and different hexoses, pentoses (including ribose), tetroses and sugar alcohols. This chain is Polyol transporter 5 (PLT5), found in Arabidopsis thaliana (Mouse-ear cress).